The sequence spans 138 residues: Histone H2B.4 (138 aa).

Residues 1–39 (MAPKAAEKKPAEKKPAGKAPAEKLPKAEKKISKDAGGSE) show a composition bias toward basic and acidic residues. Positions 1–48 (MAPKAAEKKPAEKKPAGKAPAEKLPKAEKKISKDAGGSEKKKKKSKKS) are disordered. Alanine 2 carries the n,N,N-trimethylalanine; alternate modification. Alanine 2 is subject to N,N-dimethylalanine; alternate. Alanine 2 carries the N-methylalanine; alternate modification. N6-methyllysine is present on lysine 4. Lysine 8 and lysine 13 each carry N6-acetyllysine. The residue at position 14 (lysine 14) is an N6,N6-dimethyllysine. An N6-acetyllysine mark is found at lysine 18, lysine 23, lysine 29, and lysine 30. Lysine 135 participates in a covalent cross-link: Glycyl lysine isopeptide (Lys-Gly) (interchain with G-Cter in ubiquitin).

This sequence belongs to the histone H2B family. As to quaternary structure, the nucleosome is a histone octamer containing two molecules each of H2A, H2B, H3 and H4 assembled in one H3-H4 heterotetramer and two H2A-H2B heterodimers. The octamer wraps approximately 147 bp of DNA. In terms of processing, can be acetylated to form H2BK6ac, H2BK33ac and H2BK34ac. Post-translationally, monoubiquitinated by BRE1 to form H2BK143ub1 and deubiquitinated by UBP26. Required for heterochromatic histone H3 di- and trimethylation at H3K4me. May give a specific tag for epigenetic transcriptional activation.

It is found in the nucleus. The protein localises to the chromosome. Core component of nucleosome. Nucleosomes wrap and compact DNA into chromatin, limiting DNA accessibility to the cellular machineries which require DNA as a template. Histones thereby play a central role in transcription regulation, DNA repair, DNA replication and chromosomal stability. DNA accessibility is regulated via a complex set of post-translational modifications of histones, also called histone code, and nucleosome remodeling. The protein is Histone H2B.4 of Arabidopsis thaliana (Mouse-ear cress).